Reading from the N-terminus, the 145-residue chain is MRKRDKRLYHLLLVGCVLGSLSLTAQADKGIIIIKRDVQVRNATIPPLIPDPSPTTVNANPSAHVLKQTNELSDGDFAGISSGAGISNLVTQQTNNLGGNLGNQNQLPNLAGGRGTGSGNGISNMVNSSVQRGLAPLQILTGGGK.

The signal sequence occupies residues Met-1–Ala-27.

The protein belongs to the FapA family. In terms of assembly, monomer in solution. Interacts with FapC but not FapB in vitro.

It is found in the periplasm. Its function is as follows. An intrinsically disordered chaperone for fibril amyloid FapC that guards against fibrillation, pro within the periplasm. Upon overexpression of the endogenous six-gene locus (fapA-fapF), cells form large clumps during liquid growth, make large amounts of biofilm and produce relatively unstable amyloid fibrils. The sequence is that of Functional amyloid chaperone FapA from Pseudomonas putida (strain ATCC 700007 / DSM 6899 / JCM 31910 / BCRC 17059 / LMG 24140 / F1).